Reading from the N-terminus, the 538-residue chain is Atos homolog protein B (538 aa).

The span at 1–18 (MRHVQAEPSPSSEPEAGP) shows a compositional bias: low complexity. Disordered stretches follow at residues 1-103 (MRHV…GLLG), 156-185 (HTRDWASPDPGGHGSLGESPGPAPPGQLHT), and 197-308 (GGKS…PMGR). The segment covering 227–238 (HTPPGPGPPGPC) has biased composition (pro residues). Phosphoserine is present on residues Ser254 and Ser255. Positions 274–286 (AANSSDAKATSFW) are enriched in polar residues. Residues 348 to 430 (LLGNFEESLL…VPKVGTVQVT (83 aa)) are required for macropage invasion. Residues 436–444 (QTVVKMFLV) form a transactivation domain 1 (TAD1) region.

It belongs to the ATOS family.

The protein localises to the nucleus. Transcription regulator that may syncronize transcriptional and translational programs. The sequence is that of Atos homolog protein B from Macaca fascicularis (Crab-eating macaque).